Reading from the N-terminus, the 174-residue chain is Shikimate kinase 2 (174 aa).

12–17 contributes to the ATP binding site; that stretch reads GCGKTT. Mg(2+) is bound by residues Thr-16 and Asp-32. Substrate contacts are provided by Asp-34, Arg-58, and Gly-79. Positions 112–126 are LID domain; the sequence is QAAPEEDLRPTLTGK. Arg-120 serves as a coordination point for ATP. Arg-139 lines the substrate pocket.

This sequence belongs to the shikimate kinase family. AroL subfamily. As to quaternary structure, monomer. The cofactor is Mg(2+).

Its subcellular location is the cytoplasm. It catalyses the reaction shikimate + ATP = 3-phosphoshikimate + ADP + H(+). The protein operates within metabolic intermediate biosynthesis; chorismate biosynthesis; chorismate from D-erythrose 4-phosphate and phosphoenolpyruvate: step 5/7. In terms of biological role, catalyzes the specific phosphorylation of the 3-hydroxyl group of shikimic acid using ATP as a cosubstrate. The chain is Shikimate kinase 2 from Escherichia coli O81 (strain ED1a).